The primary structure comprises 145 residues: UPF0310 protein Mvan_0064 (145 aa).

It belongs to the UPF0310 family.

This Mycolicibacterium vanbaalenii (strain DSM 7251 / JCM 13017 / BCRC 16820 / KCTC 9966 / NRRL B-24157 / PYR-1) (Mycobacterium vanbaalenii) protein is UPF0310 protein Mvan_0064.